A 118-amino-acid chain; its full sequence is Non-specific lipid-transfer protein 1 (118 aa).

Residues 1-25 (MASLRVSCLVALMCMVVISAPMAEA) form the signal peptide. 4 disulfides stabilise this stretch: Cys-29/Cys-76, Cys-39/Cys-53, Cys-54/Cys-99, and Cys-74/Cys-113.

Belongs to the plant LTP family.

Its function is as follows. Plant non-specific lipid-transfer proteins transfer phospholipids as well as galactolipids across membranes. May play a role in wax or cutin deposition in the cell walls of expanding epidermal cells and certain secretory tissues. The chain is Non-specific lipid-transfer protein 1 from Lens culinaris (Lentil).